The chain runs to 968 residues: RNA polymerase-associated protein RapA (968 aa).

Residues 163–332 enclose the Helicase ATP-binding domain; the sequence is EVGRRFAPRV…FARLRLLDPD (170 aa). 176 to 183 contributes to the ATP binding site; it reads DEVGLGKT. The DEAH box signature appears at 278 to 281; sequence DEAH. The Helicase C-terminal domain maps to 491 to 641; sequence RVDWLINFLK…AFEQTCPSGH (151 aa).

It belongs to the SNF2/RAD54 helicase family. RapA subfamily. In terms of assembly, interacts with the RNAP. Has a higher affinity for the core RNAP than for the holoenzyme. Its ATPase activity is stimulated by binding to RNAP.

In terms of biological role, transcription regulator that activates transcription by stimulating RNA polymerase (RNAP) recycling in case of stress conditions such as supercoiled DNA or high salt concentrations. Probably acts by releasing the RNAP, when it is trapped or immobilized on tightly supercoiled DNA. Does not activate transcription on linear DNA. Probably not involved in DNA repair. This is RNA polymerase-associated protein RapA from Shewanella sediminis (strain HAW-EB3).